Consider the following 617-residue polypeptide: Kelch-like protein diablo (617 aa).

Residues 1–55 (MGDPLLPGSTGLGSGGTAAATGGTGTTGTGLGSGGTSGTERPPSPARLTHTSEKH) form a disordered region. Over residues 10–37 (TGLGSGGTAAATGGTGTTGTGLGSGGTS) the composition is skewed to gly residues. A BTB domain is found at 73–140 (CDVVLNVGGR…CYTAHIIVEE (68 aa)). A BACK domain is found at 175-277 (CLGIRAFADT…SPKFLVGTVG (103 aa)). Kelch repeat units follow at residues 324-370 (VLFA…VLND), 372-418 (LYAV…VLDG), 419-465 (FLYA…VLSG), 467-512 (LYAI…VFNN), 514-559 (IYAV…VVNG), and 560-606 (QLYA…VMRA).

It functions in the pathway protein modification; protein ubiquitination. Its function is as follows. Probable substrate-specific adapter of an E3 ubiquitin-protein ligase complex which mediates the ubiquitination and subsequent proteasomal degradation of target proteins. May have a role in synapse differentiation and growth. The sequence is that of Kelch-like protein diablo from Drosophila mojavensis (Fruit fly).